The following is a 135-amino-acid chain: Glutaredoxin-C3 (135 aa).

Residues 26 to 134 form the Glutaredoxin domain; that stretch reads VARVERLASE…PLLKEAGALW (109 aa). An intrachain disulfide couples Cys-46 to Cys-49. Residues 132–135 carry the Responsive for interaction with TGA factors motif; it reads ALWL.

The protein belongs to the glutaredoxin family. CC-type subfamily.

The protein resides in the cytoplasm. The protein localises to the nucleus. Its function is as follows. Has a glutathione-disulfide oxidoreductase activity in the presence of NADPH and glutathione reductase. Reduces low molecular weight disulfides and proteins. The chain is Glutaredoxin-C3 (GRXC3) from Oryza sativa subsp. japonica (Rice).